A 202-amino-acid polypeptide reads, in one-letter code: Outer-membrane lipoprotein LolB (202 aa).

Residues 1–24 form the signal peptide; it reads MESKEQHLIRQYFILAMFFLFLAG. Cys25 carries the N-palmitoyl cysteine lipid modification. Cys25 carries the S-diacylglycerol cysteine lipid modification.

This sequence belongs to the LolB family. Monomer.

The protein localises to the cell outer membrane. Plays a critical role in the incorporation of lipoproteins in the outer membrane after they are released by the LolA protein. This Pseudoalteromonas translucida (strain TAC 125) protein is Outer-membrane lipoprotein LolB.